We begin with the raw amino-acid sequence, 209 residues long: Peptide methionine sulfoxide reductase MsrA (209 aa).

Cysteine 51 is a catalytic residue.

Belongs to the MsrA Met sulfoxide reductase family.

It carries out the reaction L-methionyl-[protein] + [thioredoxin]-disulfide + H2O = L-methionyl-(S)-S-oxide-[protein] + [thioredoxin]-dithiol. It catalyses the reaction [thioredoxin]-disulfide + L-methionine + H2O = L-methionine (S)-S-oxide + [thioredoxin]-dithiol. Its function is as follows. Has an important function as a repair enzyme for proteins that have been inactivated by oxidation. Catalyzes the reversible oxidation-reduction of methionine sulfoxide in proteins to methionine. In Vibrio vulnificus (strain CMCP6), this protein is Peptide methionine sulfoxide reductase MsrA.